Reading from the N-terminus, the 72-residue chain is UPF0346 protein GTNG_1419 (72 aa).

The protein belongs to the UPF0346 family.

In Geobacillus thermodenitrificans (strain NG80-2), this protein is UPF0346 protein GTNG_1419.